Consider the following 122-residue polypeptide: Basic phospholipase A2 PLA-B (122 aa).

7 cysteine pairs are disulfide-bonded: C26-C115, C28-C44, C43-C95, C49-C122, C50-C88, C57-C81, and C75-C86. Y27, G29, and G31 together coordinate Ca(2+). H47 is a catalytic residue. D48 lines the Ca(2+) pocket. The active site involves D89.

It belongs to the phospholipase A2 family. Group II subfamily. D49 sub-subfamily. It depends on Ca(2+) as a cofactor. In terms of tissue distribution, expressed by the venom gland.

Its subcellular location is the secreted. It carries out the reaction a 1,2-diacyl-sn-glycero-3-phosphocholine + H2O = a 1-acyl-sn-glycero-3-phosphocholine + a fatty acid + H(+). Its function is as follows. Snake venom phospholipase A2 (PLA2) that displays edema-inducing activities. PLA-B is three times more active than PLA-A in edema-inducing activities. PLA2 catalyzes the calcium-dependent hydrolysis of the 2-acyl groups in 3-sn-phosphoglycerides. The polypeptide is Basic phospholipase A2 PLA-B (Protobothrops flavoviridis (Habu)).